Here is a 291-residue protein sequence, read N- to C-terminus: ATP synthase gamma chain (291 aa).

The protein belongs to the ATPase gamma chain family. In terms of assembly, F-type ATPases have 2 components, CF(1) - the catalytic core - and CF(0) - the membrane proton channel. CF(1) has five subunits: alpha(3), beta(3), gamma(1), delta(1), epsilon(1). CF(0) has three main subunits: a, b and c.

It localises to the cell inner membrane. Produces ATP from ADP in the presence of a proton gradient across the membrane. The gamma chain is believed to be important in regulating ATPase activity and the flow of protons through the CF(0) complex. This chain is ATP synthase gamma chain, found in Roseobacter denitrificans (strain ATCC 33942 / OCh 114) (Erythrobacter sp. (strain OCh 114)).